A 299-amino-acid chain; its full sequence is Transcription factor MYB17 (299 aa).

HTH myb-type domains lie at 9–61 and 62–116; these read KIGL…TNYL and RPDI…KKRL. 2 consecutive DNA-binding regions (H-T-H motif) follow at residues 37–61 and 89–112; these read WRTL…TNYL and WAAI…NTHL.

As to quaternary structure, interacts with LFY. In terms of tissue distribution, expressed in the shoot apex, young flower buds, developing carpels and siliques. Expressed in floral meristem, initiating floral primordia and developing flowers.

It is found in the nucleus. Functionally, transcription factor that may play a role in flower development by repressing ANT. Regulates the transition of meristem identity from vegetative growth to flowering. Acts downstream of LFY and upstream of AP1. Directly activates AP1 to promote floral fate. Together with LFY and AP1 may constitute a regulatory network that contributes to an abrupt and robust meristem identity transition. The sequence is that of Transcription factor MYB17 from Arabidopsis thaliana (Mouse-ear cress).